The primary structure comprises 411 residues: Carbohydrate sulfotransferase 1 (411 aa).

Residues 1 to 2 (MQ) lie on the Cytoplasmic side of the membrane. The chain crosses the membrane as a helical; Signal-anchor for type II membrane protein span at residues 3 to 23 (CSWKAVLLLALASIAIQYTAI). Residues 24 to 411 (RTFTAKSFHT…VEERDFRPFS (388 aa)) lie on the Lumenal side of the membrane. Asn56 carries an N-linked (GlcNAc...) asparagine glycan. 69-75 (TRSGSSF) contributes to the 3'-phosphoadenylyl sulfate binding site. Residues Asn145 and Asn189 are each glycosylated (N-linked (GlcNAc...) asparagine). Residue 234–242 (RDPRGILAS) coordinates 3'-phosphoadenylyl sulfate. Asn334 is a glycosylation site (N-linked (GlcNAc...) asparagine). The Cell attachment site motif lies at 337–339 (RGD).

Belongs to the sulfotransferase 1 family. Gal/GlcNAc/GalNAc subfamily. Widely expressed at low level. Expressed in brain and skeletal muscle. Expressed by high endothelial cells (HEVs) and leukocytes.

The protein localises to the golgi apparatus membrane. The enzyme catalyses 3'-phosphoadenylyl sulfate + keratan = adenosine 3',5'-bisphosphate + keratan 6'-sulfate.. The protein operates within glycan metabolism. Functionally, sulfotransferase that utilizes 3'-phospho-5'-adenylyl sulfate (PAPS) as sulfonate donor to catalyze the transfer of sulfate to position 6 of internal galactose (Gal) residues of keratan. Cooperates with B4GALT4 and B3GNT7 glycosyltransferases and CHST6 sulfotransferase to construct and elongate disulfated disaccharide unit [-&gt;3(6-sulfoGalbeta)1-&gt;4(6-sulfoGlcNAcbeta)1-&gt;] within keratan sulfate polymer. Has a preference for sulfating keratan sulfate, but it also transfers sulfate to the unsulfated polymer. Involved in biosynthesis of phosphacan, a major keratan sulfate proteoglycan in the developing brain. Involved in biosynthesis of 6-sulfoGalbeta-containing O-linked glycans in high endothelial venules of lymph nodes. May act in a synergistic manner with CHST4 to generate sialyl 6',6-disulfo Lewis X motif, a recognition determinant for immune cell receptors implicated in leukocyte trafficking. Catalyzes sulfation of N-acetyllactosamine (LacNAc) oligosaccharides with highest efficiency for sialylated LacNAc structures. The chain is Carbohydrate sulfotransferase 1 from Homo sapiens (Human).